Here is a 243-residue protein sequence, read N- to C-terminus: Alanyl-tRNA editing protein AlaX-M (243 aa).

Positions 105, 109, 208, and 212 each coordinate Zn(2+).

This sequence belongs to the class-II aminoacyl-tRNA synthetase family. Editing domain AlaX-M subfamily. It depends on Zn(2+) as a cofactor.

The protein resides in the cytoplasm. Functionally, functions in trans to edit the amino acid moiety from incorrectly charged Ser-tRNA(Ala) or Gly-tRNA(Ala). Has no activity on incorrectly charged Ser-tRNA(Thr), nor on correctly charged Ala-tRNA(Ala) or Ser-tRNA(Ser). The protein is Alanyl-tRNA editing protein AlaX-M (alaXM) of Methanosarcina barkeri (strain Fusaro / DSM 804).